The chain runs to 342 residues: tRNA dimethylallyltransferase (342 aa).

Residues methionine 1–glycine 30 are disordered. The span at alanine 19 to glycine 30 shows a compositional bias: gly residues. Glycine 49–serine 56 contributes to the ATP binding site. Threonine 51–serine 56 serves as a coordination point for substrate. The tract at residues aspartate 74–glutamine 77 is interaction with substrate tRNA.

It belongs to the IPP transferase family. As to quaternary structure, monomer. Mg(2+) is required as a cofactor.

It catalyses the reaction adenosine(37) in tRNA + dimethylallyl diphosphate = N(6)-dimethylallyladenosine(37) in tRNA + diphosphate. Catalyzes the transfer of a dimethylallyl group onto the adenine at position 37 in tRNAs that read codons beginning with uridine, leading to the formation of N6-(dimethylallyl)adenosine (i(6)A). The polypeptide is tRNA dimethylallyltransferase (Salinispora arenicola (strain CNS-205)).